Reading from the N-terminus, the 180-residue chain is Formate hydrogenlyase subunit 6 (180 aa).

2 4Fe-4S ferredoxin-type domains span residues 31 to 60 and 66 to 95; these read GKPEQNPQQCIGCAACVNACPSNALTVETD and LAWEFNLGHCIFCGRCEEVCPTAAIKLSQE. Residues Cys40, Cys43, Cys46, Cys50, Cys75, Cys78, Cys81, and Cys85 each coordinate [4Fe-4S] cluster.

FHL comprises of a formate dehydrogenase, unidentified electron carriers and a hydrogenase (isoenzyme 3). In this non-energy conserving pathway, molecular hydrogen and carbodioxide are released from formate.

Functionally, probable electron transfer protein for hydrogenase 3. In Escherichia coli (strain K12), this protein is Formate hydrogenlyase subunit 6 (hycF).